A 1022-amino-acid chain; its full sequence is Integrator complex subunit 4 (1022 aa).

Residues threonine 148 and lysine 184 each contribute to the 1D-myo-inositol hexakisphosphate site. The interval 818-840 (KDEEEKPPVVETDMPMKESVSRD) is disordered.

It belongs to the Integrator subunit 4 family. In terms of assembly, belongs to the multiprotein complex Integrator, at least composed of IntS1, IntS2, IntS3, IntS4, omd/IntS5, IntS6, defl/IntS7, IntS8, IntS9, IntS10, IntS11, IntS12, asun/IntS13, IntS14 and IntS15. The core complex associates with protein phosphatase 2A subunits mts/PP2A and Pp2A-29B, to form the Integrator-PP2A (INTAC) complex. IntS4 is part of the RNA endonuclease subcomplex, composed of IntS4, IntS9, IntS11 and inositol hexakisphosphate (InsP6).

It localises to the nucleus. In terms of biological role, component of the integrator complex, a multiprotein complex that terminates RNA polymerase II (Pol II) transcription in the promoter-proximal region of genes. The integrator complex provides a quality checkpoint during transcription elongation by driving premature transcription termination of transcripts that are unfavorably configured for transcriptional elongation: the complex terminates transcription by (1) catalyzing dephosphorylation of the C-terminal domain (CTD) of Pol II subunit Polr2A/Rbp1 and Spt5, and (2) degrading the exiting nascent RNA transcript via endonuclease activity. The integrator complex is also involved in the 3'-end processing of the U7 snRNA, and also the spliceosomal snRNAs U1, U2, U4 and U5. The protein is Integrator complex subunit 4 of Drosophila melanogaster (Fruit fly).